Here is a 921-residue protein sequence, read N- to C-terminus: Probable TonB-dependent receptor NMB1497 (921 aa).

The first 25 residues, 1–25 (MRSSFRLKPICFYLMGVTLYHYSYA), serve as a signal peptide directing secretion. The TBDR plug domain maps to 53-174 (DKKVFTDARA…LAGSANLRTL (122 aa)). A TBDR beta-barrel domain is found at 185-921 (TYGLLLKGLT…TFLMTMSYKF (737 aa)). The short motif at 904–921 (LTNFARGRTFLMTMSYKF) is the TonB C-terminal box element.

This sequence belongs to the TonB-dependent receptor family.

It localises to the cell outer membrane. Functionally, probable receptor, TonB-dependent. The sequence is that of Probable TonB-dependent receptor NMB1497 from Neisseria meningitidis serogroup B (strain ATCC BAA-335 / MC58).